Reading from the N-terminus, the 443-residue chain is tRNA (guanine-N(7)-)-methyltransferase non-catalytic subunit TRM82 (443 aa).

Positions 67–93 (ASKKLKTNDGEPVAQPKKQAKVPKPGP) are disordered. 3 WD repeats span residues 97–137 (PVYQ…KDNI), 193–235 (GHVS…IVDK), and 239–279 (GHEE…LLFK).

Belongs to the WD repeat TRM82 family. Forms a heterodimer with the catalytic subunit TRM8.

It localises to the nucleus. The protein operates within tRNA modification; N(7)-methylguanine-tRNA biosynthesis. Its function is as follows. Required for the formation of N(7)-methylguanine at position 46 (m7G46) in tRNA. In the complex, it is required to stabilize and induce conformational changes of the catalytic subunit. In Kluyveromyces lactis (strain ATCC 8585 / CBS 2359 / DSM 70799 / NBRC 1267 / NRRL Y-1140 / WM37) (Yeast), this protein is tRNA (guanine-N(7)-)-methyltransferase non-catalytic subunit TRM82.